Reading from the N-terminus, the 178-residue chain is MNPLLQDYARILLEWNQTHNLSGAKNLSELEPQITDALKPLEFIKDFKSCLDIGSGAGLPAIPLALEKPEVKFILLEPRIKRAAFLNYLKSVLPLKNIEIIKKRLEDYQNLLQVDLITSRAVASSSFLIEKSQRFLKDKGYFLFYKGEQLKDEIACKDTECFMHQKRVYFYKSKESLC.

S-adenosyl-L-methionine is bound by residues G54, L59, 105–106 (LE), and R120.

The protein belongs to the methyltransferase superfamily. RNA methyltransferase RsmG family.

It is found in the cytoplasm. It carries out the reaction guanosine(527) in 16S rRNA + S-adenosyl-L-methionine = N(7)-methylguanosine(527) in 16S rRNA + S-adenosyl-L-homocysteine. In terms of biological role, specifically methylates the N7 position of guanine in position 527 of 16S rRNA. This Helicobacter pylori (strain ATCC 700392 / 26695) (Campylobacter pylori) protein is Ribosomal RNA small subunit methyltransferase G.